The following is a 460-amino-acid chain: Lipase member H (460 aa).

An N-terminal signal peptide occupies residues 1–24; the sequence is MLLRFYFNGLLFVGCLLSWGRSDT. Asn67 and Asn75 each carry an N-linked (GlcNAc...) asparagine glycan. Ser163 (nucleophile) is an active-site residue. Asn177 is a glycosylation site (N-linked (GlcNAc...) asparagine). Residue Asp187 is the Charge relay system of the active site. A disulfide bridge links Cys242 with Cys255. His257 (charge relay system) is an active-site residue. Intrachain disulfides connect Cys279/Cys290 and Cys293/Cys301. N-linked (GlcNAc...) asparagine glycosylation is present at Asn289. An N-linked (GlcNAc...) asparagine glycan is attached at Asn366. Residues Cys436 and Cys455 are joined by a disulfide bond.

The protein belongs to the AB hydrolase superfamily. Lipase family.

The protein resides in the secreted. The protein localises to the cell membrane. It catalyses the reaction 1-hexadecanoyl-2-(9Z-octadecenoyl)-sn-glycero-3-phosphate + H2O = 2-(9Z-octadecenoyl)-sn-glycero-3-phosphate + hexadecanoate + H(+). Hydrolyzes specifically phosphatidic acid (PA) to produce 2-acyl lysophosphatidic acid (LPA; a potent bioactive lipid mediator) and fatty acid. Does not hydrolyze other phospholipids, like phosphatidylserine (PS), phosphatidylcholine (PC) and phosphatidylethanolamine (PE) or triacylglycerol (TG). The chain is Lipase member H (liph) from Xenopus tropicalis (Western clawed frog).